The chain runs to 214 residues: MRKRISAIIMTLFMVFMSCNNGGPELKSDEVAKSDGTVLDLAKISAKIKEASAFAASVKEVHTLVKSVDTLAGAIGKKIKSDGKFDAMAGKNGSLLAGAYNVALDINSKLTVLDGKAGLSSLLKAKVTAAKTSGESFSNKLKTEHTDLGKEEASDDNAKAALLVTNATKNKGVTELEALNTAVDALLKAAEGEVEAAIKELTAPVKVEKPSQNN.

Positions 1-18 (MRKRISAIIMTLFMVFMS) are cleaved as a signal peptide. Cys-19 is lipidated: N-palmitoyl cysteine. Residue Cys-19 is the site of S-diacylglycerol cysteine attachment.

It belongs to the variable small protein (Vsp) family.

It is found in the cell outer membrane. Its function is as follows. The Vlp and Vsp proteins are antigenically distinct proteins, only one vlp or vsp gene is transcriptionally active at any one time. Switching between these genes is a mechanism of host immune response evasion. The sequence is that of Variable small protein 1 from Borrelia hermsii.